Here is a 160-residue protein sequence, read N- to C-terminus: 6,7-dimethyl-8-ribityllumazine synthase (160 aa).

Residues Phe23, 61 to 63 (SFE), and 85 to 87 (AVI) each bind 5-amino-6-(D-ribitylamino)uracil. 90 to 91 (DT) is a (2S)-2-hydroxy-3-oxobutyl phosphate binding site. The active-site Proton donor is His93. Phe118 is a binding site for 5-amino-6-(D-ribitylamino)uracil. Position 132 (Arg132) interacts with (2S)-2-hydroxy-3-oxobutyl phosphate.

Belongs to the DMRL synthase family.

It carries out the reaction (2S)-2-hydroxy-3-oxobutyl phosphate + 5-amino-6-(D-ribitylamino)uracil = 6,7-dimethyl-8-(1-D-ribityl)lumazine + phosphate + 2 H2O + H(+). Its pathway is cofactor biosynthesis; riboflavin biosynthesis; riboflavin from 2-hydroxy-3-oxobutyl phosphate and 5-amino-6-(D-ribitylamino)uracil: step 1/2. Functionally, catalyzes the formation of 6,7-dimethyl-8-ribityllumazine by condensation of 5-amino-6-(D-ribitylamino)uracil with 3,4-dihydroxy-2-butanone 4-phosphate. This is the penultimate step in the biosynthesis of riboflavin. This is 6,7-dimethyl-8-ribityllumazine synthase from Synechococcus sp. (strain CC9311).